Reading from the N-terminus, the 339-residue chain is Fructose-1,6-bisphosphatase class 1 (339 aa).

Mg(2+) is bound by residues glutamate 91, aspartate 113, leucine 115, and aspartate 116. Residues 116–119 (DGSS), asparagine 208, and lysine 274 contribute to the substrate site. Residue glutamate 280 coordinates Mg(2+).

Belongs to the FBPase class 1 family. As to quaternary structure, homotetramer. Mg(2+) serves as cofactor.

The protein resides in the cytoplasm. It carries out the reaction beta-D-fructose 1,6-bisphosphate + H2O = beta-D-fructose 6-phosphate + phosphate. It participates in carbohydrate biosynthesis; gluconeogenesis. This chain is Fructose-1,6-bisphosphatase class 1, found in Cupriavidus pinatubonensis (strain JMP 134 / LMG 1197) (Cupriavidus necator (strain JMP 134)).